The chain runs to 156 residues: Protein Smg homolog (156 aa).

This sequence belongs to the Smg family.

In Halorhodospira halophila (strain DSM 244 / SL1) (Ectothiorhodospira halophila (strain DSM 244 / SL1)), this protein is Protein Smg homolog.